Here is a 348-residue protein sequence, read N- to C-terminus: tRNA pseudouridine synthase D (348 aa).

The Nucleophile role is filled by Asp-84. In terms of domain architecture, TRUD spans Gly-162–Leu-308.

Belongs to the pseudouridine synthase TruD family.

It carries out the reaction uridine(13) in tRNA = pseudouridine(13) in tRNA. Functionally, responsible for synthesis of pseudouridine from uracil-13 in transfer RNAs. This is tRNA pseudouridine synthase D from Chromohalobacter salexigens (strain ATCC BAA-138 / DSM 3043 / CIP 106854 / NCIMB 13768 / 1H11).